The primary structure comprises 1377 residues: DNA-directed RNA polymerase subunit beta' (1377 aa).

The Zn(2+) site is built by C70, C72, C85, and C88. Mg(2+)-binding residues include D460, D462, and D464. The Zn(2+) site is built by C808, C882, C889, and C892.

This sequence belongs to the RNA polymerase beta' chain family. The RNAP catalytic core consists of 2 alpha, 1 beta, 1 beta' and 1 omega subunit. When a sigma factor is associated with the core the holoenzyme is formed, which can initiate transcription. The cofactor is Mg(2+). Requires Zn(2+) as cofactor.

It carries out the reaction RNA(n) + a ribonucleoside 5'-triphosphate = RNA(n+1) + diphosphate. Functionally, DNA-dependent RNA polymerase catalyzes the transcription of DNA into RNA using the four ribonucleoside triphosphates as substrates. The protein is DNA-directed RNA polymerase subunit beta' of Geotalea uraniireducens (strain Rf4) (Geobacter uraniireducens).